The sequence spans 608 residues: Glutamine--fructose-6-phosphate aminotransferase [isomerizing] (608 aa).

Catalysis depends on Cys-2, which acts as the Nucleophile; for GATase activity. The Glutamine amidotransferase type-2 domain occupies 2–217 (CGIVGYIGKK…DNEFVLMTKD (216 aa)). SIS domains follow at residues 284–424 (ISKE…EKGT) and 453–598 (IMKK…VDKP). Lys-603 serves as the catalytic For Fru-6P isomerization activity.

Homodimer.

Its subcellular location is the cytoplasm. It carries out the reaction D-fructose 6-phosphate + L-glutamine = D-glucosamine 6-phosphate + L-glutamate. Its function is as follows. Catalyzes the first step in hexosamine metabolism, converting fructose-6P into glucosamine-6P using glutamine as a nitrogen source. In Clostridium tetani (strain Massachusetts / E88), this protein is Glutamine--fructose-6-phosphate aminotransferase [isomerizing].